The sequence spans 468 residues: Secreted triacylglycerol lipase LIP7 (468 aa).

A signal peptide spans 1–21; it reads MFPRQILVFAALGLCFALVAG. A disulfide bridge links Cys125 with Cys295. Ser209 acts as the Nucleophile in catalysis. Active-site residues include Asp355 and His389.

It belongs to the AB hydrolase superfamily. Lipase family. Class Lip subfamily.

Its subcellular location is the secreted. The protein localises to the cell wall. The enzyme catalyses a triacylglycerol + H2O = a diacylglycerol + a fatty acid + H(+). The catalysed reaction is a monoacylglycerol + H2O = glycerol + a fatty acid + H(+). It carries out the reaction a diacylglycerol + H2O = a monoacylglycerol + a fatty acid + H(+). In terms of biological role, secreted lipase involved in Dandruff and seborrheic dermatitis (D/SD) probably via lipase-mediated breakdown of sebaceous lipids and release of irritating free fatty acids. Has triacylglycerol lipase activity and is able to hydrolyze triolein. Mostly converts monoolein to di- and triolein, while free fatty acids are only produced in low amounts. The protein is Secreted triacylglycerol lipase LIP7 of Malassezia globosa (strain ATCC MYA-4612 / CBS 7966) (Dandruff-associated fungus).